A 367-amino-acid chain; its full sequence is NADH-quinone oxidoreductase subunit D (367 aa).

Belongs to the complex I 49 kDa subunit family. NDH-1 is composed of 14 different subunits. Subunits NuoB, C, D, E, F, and G constitute the peripheral sector of the complex.

Its subcellular location is the cell inner membrane. It catalyses the reaction a quinone + NADH + 5 H(+)(in) = a quinol + NAD(+) + 4 H(+)(out). NDH-1 shuttles electrons from NADH, via FMN and iron-sulfur (Fe-S) centers, to quinones in the respiratory chain. The immediate electron acceptor for the enzyme in this species is believed to be ubiquinone. Couples the redox reaction to proton translocation (for every two electrons transferred, four hydrogen ions are translocated across the cytoplasmic membrane), and thus conserves the redox energy in a proton gradient. In Thermosipho melanesiensis (strain DSM 12029 / CIP 104789 / BI429), this protein is NADH-quinone oxidoreductase subunit D.